Reading from the N-terminus, the 428-residue chain is Putative zinc finger protein 355P (428 aa).

Residues 1–64 enclose the KRAB domain; the sequence is MRDEVAEKEK…KHPGLTQHNI (64 aa). 3 C2H2-type zinc fingers span residues 72–94, 100–122, and 128–150; these read YKCK…QRIH, YKCE…MRAH, and YKCE…KRIH. The segment at 156–178 adopts a C2H2-type 4; degenerate zinc-finger fold; sequence YKFEECDKAFYWVLSFTKHMIIH. The C2H2-type 5; degenerate zinc-finger motif lies at 184 to 206; that stretch reads YKYQECGKAFKWSSNLTIHKRIH. The C2H2-type 6; degenerate zinc finger occupies 212–234; that stretch reads CKCEECGKACKQSLGLTIQKRIH. A C2H2-type 7; degenerate zinc finger spans residues 263–285; that stretch reads YNCEKCGKAFYCSSNLIQNNIVH. C2H2-type zinc fingers lie at residues 291-313 and 335-357; these read YKCQ…KIIH and YKCE…MIVH. The C2H2-type 10; degenerate zinc finger occupies 363 to 385; sequence YKCEECGKAFKWSSELTIHQRIR. Residues 391–413 form a C2H2-type 11 zinc finger; it reads YKCEECVRVFKHSSKLNEHKRNH.

It belongs to the krueppel C2H2-type zinc-finger protein family.

It localises to the nucleus. May be involved in transcriptional regulation. In Homo sapiens (Human), this protein is Putative zinc finger protein 355P (ZNF355P).